Reading from the N-terminus, the 311-residue chain is Ribosomal RNA small subunit methyltransferase H 1 (311 aa).

S-adenosyl-L-methionine-binding positions include 33-35 (AGH), aspartate 53, phenylalanine 80, aspartate 101, and glutamine 108.

The protein belongs to the methyltransferase superfamily. RsmH family.

The protein resides in the cytoplasm. It carries out the reaction cytidine(1402) in 16S rRNA + S-adenosyl-L-methionine = N(4)-methylcytidine(1402) in 16S rRNA + S-adenosyl-L-homocysteine + H(+). Its function is as follows. Specifically methylates the N4 position of cytidine in position 1402 (C1402) of 16S rRNA. This Alkaliphilus metalliredigens (strain QYMF) protein is Ribosomal RNA small subunit methyltransferase H 1.